Consider the following 272-residue polypeptide: Nuclear transcription factor Y subunit A-1 (272 aa).

Disordered stretches follow at residues 1 to 20 (MQSKPGRENEEEVNNHHAVQ) and 34 to 106 (SFGV…PALS). Composition is skewed to polar residues over residues 46 to 61 (IPSNSSSLDCPNGSES) and 82 to 92 (KDSQAATSSRS). A Subunit association domain (SAD) motif is present at residues 175 to 198 (YVNAKQYEGILRRRKARAKAELER). The NFYA/HAP2-type DNA-binding region spans 205–230 (KPYLHESRHKHAMRRARASGGRFAKK). A disordered region spans residues 206–272 (PYLHESRHKH…NETLNSSGAP (67 aa)). Positions 211 to 221 (SRHKHAMRRAR) are enriched in basic residues. Basic and acidic residues predominate over residues 229–247 (KKSEVEAGEDAGGRDRERG). Polar residues-rich tracts occupy residues 248–257 (SATNSSGSEQ) and 263–272 (NETLNSSGAP).

It belongs to the NFYA/HAP2 subunit family. In terms of assembly, heterotrimeric transcription factor composed of three components, NF-YA, NF-YB and NF-YC. NF-YB and NF-YC must interact and dimerize for NF-YA association and DNA binding. Ubiquitous.

It localises to the nucleus. Stimulates the transcription of various genes by recognizing and binding to a CCAAT motif in promoters. The sequence is that of Nuclear transcription factor Y subunit A-1 (NFYA1) from Arabidopsis thaliana (Mouse-ear cress).